Consider the following 264-residue polypeptide: Non-homologous end-joining factor xrc4 (264 aa).

A compositionally biased stretch (basic and acidic residues) spans 173-186 (RNNEDNEDNHHINY). A disordered region spans residues 173–264 (RNNEDNEDNH…SHESSETVSE (92 aa)). The segment covering 200–209 (QEGVNSSAVS) has biased composition (polar residues). The span at 248–264 (DDSHRRSSHESSETVSE) shows a compositional bias: basic and acidic residues.

It belongs to the XRCC4-XLF family. XRCC4 subfamily. In terms of assembly, interacts with lig4; the interaction is direct.

Its subcellular location is the nucleus. Its function is as follows. Involved in double-strand break repair via non-homologous end joining (NHEJ); the repair of a double-strand break in DNA in which the two broken ends are rejoined with little or no sequence complementarity. In Schizosaccharomyces pombe (strain 972 / ATCC 24843) (Fission yeast), this protein is Non-homologous end-joining factor xrc4.